The primary structure comprises 154 residues: MDKMRPRVVDVKEIEPNRKRGGDLRTLLTPVTVGATSGFMGLAIMRPGERISEHYHPYSEEFVYVVEGRLEVDLDGETFPLRADQGLMIPIDMRHRFRNVGDEEARMVFHLSPLAPKPSLGHVDTEAPAISDDVKAYPLVQEESGRPERPGVLS.

The region spanning 42–108 (LAIMRPGERI…NVGDEEARMV (67 aa)) is the Cupin type-2 domain. Positions 133–154 (DVKAYPLVQEESGRPERPGVLS) are disordered. The segment covering 143-154 (ESGRPERPGVLS) has biased composition (basic and acidic residues).

The protein belongs to the SchB/CurC family.

It participates in antibiotic biosynthesis; curamycin biosynthesis. The polypeptide is Polyketide synthase CurC (curC) (Streptomyces cyaneus (Streptomyces curacoi)).